A 597-amino-acid chain; its full sequence is Bile salt-activated lipase (597 aa).

The signal sequence occupies residues 1 to 18; sequence LGASRLGPSPGCLAVASA. C82 and C98 are oxidised to a cystine. The N-linked (GlcNAc...) asparagine glycan is linked to N205. S212 acts as the Acyl-ester intermediate in catalysis. A disulfide bond links C264 and C275. D338 functions as the Charge relay system in the catalytic mechanism. The N-linked (GlcNAc...) asparagine glycan is linked to N379. H453 functions as the Charge relay system in the catalytic mechanism. Positions 553-591 are disordered; the sequence is AGASLLPPEDNSQASPVPPADNSGAPTEPSAGDSEVAQM.

The protein belongs to the type-B carboxylesterase/lipase family. Interacts with CLC.

It localises to the secreted. The enzyme catalyses a triacylglycerol + H2O = a diacylglycerol + a fatty acid + H(+). The catalysed reaction is 1,2,3-tri-(9Z-octadecenoyl)-glycerol + H2O = di-(9Z)-octadecenoylglycerol + (9Z)-octadecenoate + H(+). It carries out the reaction 1,2,3-trioctanoylglycerol + H2O = dioctanoylglycerol + octanoate + H(+). It catalyses the reaction a sterol ester + H2O = a sterol + a fatty acid + H(+). The enzyme catalyses cholesteryl (9Z-octadecenoate) + H2O = cholesterol + (9Z)-octadecenoate + H(+). The catalysed reaction is an acetyl ester + H2O = an aliphatic alcohol + acetate + H(+). It carries out the reaction a butanoate ester + H2O = an aliphatic alcohol + butanoate + H(+). It catalyses the reaction 9-hexadecanoyloxy-octadecanoate + H2O = 9-hydroxy-octadecanoate + hexadecanoate + H(+). The enzyme catalyses 9-(9Z-octadecenoyloxy)-octadecanoate + H2O = 9-hydroxy-octadecanoate + (9Z)-octadecenoate + H(+). The catalysed reaction is 1-hexadecanoyl-sn-glycero-3-phosphocholine + H2O = sn-glycerol 3-phosphocholine + hexadecanoate + H(+). It carries out the reaction 12-hexadecanoyloxy-octadecanoate + H2O = 12-hydroxyoctadecanoate + hexadecanoate + H(+). It catalyses the reaction 12-(9Z-octadecenoyloxy)-octadecanoate + H2O = 12-hydroxyoctadecanoate + (9Z)-octadecenoate + H(+). The enzyme catalyses 13-(9Z-octadecenoyloxy)-octadecanoate + H2O = 13-hydroxy-octadecanoate + (9Z)-octadecenoate + H(+). The catalysed reaction is 9-(9Z-hexadecenoyloxy)-octadecanoate + H2O = (9Z)-hexadecenoate + 9-hydroxy-octadecanoate + H(+). It carries out the reaction 12-(9Z-hexadecenoyloxy)-octadecanoate + H2O = 12-hydroxyoctadecanoate + (9Z)-hexadecenoate + H(+). It catalyses the reaction 13-(9Z-hexadecenoyloxy)-octadecanoate + H2O = 13-hydroxy-octadecanoate + (9Z)-hexadecenoate + H(+). The enzyme catalyses 12-octadecanoyloxy-octadecanoate + H2O = 12-hydroxyoctadecanoate + octadecanoate + H(+). The catalysed reaction is 13-octadecanoyloxy-octadecanoate + H2O = 13-hydroxy-octadecanoate + octadecanoate + H(+). It carries out the reaction 5-(9Z-hexadecenoyloxy)-octadecanoate + H2O = 5-hydroxy-octadecanoate + (9Z)-hexadecenoate + H(+). It catalyses the reaction 9-octadecanoyloxy-octadecanoate + H2O = 9-hydroxy-octadecanoate + octadecanoate + H(+). Activated by bile salts such as sodium taurocholate. Its function is as follows. Catalyzes the hydrolysis of a wide range of substrates including cholesteryl esters, phospholipids, lysophospholipids, di- and tri-acylglycerols, and fatty acid esters of hydroxy fatty acids (FAHFA). Preferentially hydrolyzes FAHFAs with the ester bond further away from the carboxylate. Unsaturated FAHFAs are hydrolyzed more quickly than saturated FAHFAs. Has an essential role in the complete digestion of dietary lipids and their intestinal absorption, along with the absorption of fat-soluble vitamins. This is Bile salt-activated lipase (CEL) from Bos taurus (Bovine).